The sequence spans 383 residues: Mating-type protein MAT-1 (383 aa).

Positions 60 to 117 (KARKALNAFVGFRCYYVTIPMFKSWPMKKLSNLIGLLWEADPNKSLWSLMAKAWSTIR) form a DNA-binding region, alpha box.

Belongs to the MATALPHA1 family.

The protein localises to the nucleus. In terms of biological role, mating type proteins are sequence specific DNA-binding proteins that act as master switches in fungal differentiation by controlling gene expression in a cell type-specific fashion. Transcriptional activator that induces the transcription of alpha-specific genes. The polypeptide is Mating-type protein MAT-1 (MAT1) (Cochliobolus heterostrophus (Southern corn leaf blight fungus)).